A 112-amino-acid polypeptide reads, in one-letter code: Divalent-cation tolerance protein CutA (112 aa).

Cu cation-binding residues include C16, H83, and H84.

This sequence belongs to the CutA family. In terms of assembly, homotrimer. Requires Cu cation as cofactor.

It is found in the cytoplasm. Functionally, involved in resistance toward heavy metals. The sequence is that of Divalent-cation tolerance protein CutA from Shigella flexneri.